Here is a 324-residue protein sequence, read N- to C-terminus: tRNA U34 carboxymethyltransferase (324 aa).

Residues lysine 91, tryptophan 105, lysine 110, glycine 130, 152-154, 181-182, methionine 196, tyrosine 200, and arginine 315 contribute to the carboxy-S-adenosyl-L-methionine site; these read DPS and IE.

The protein belongs to the class I-like SAM-binding methyltransferase superfamily. CmoB family. Homotetramer.

The enzyme catalyses carboxy-S-adenosyl-L-methionine + 5-hydroxyuridine(34) in tRNA = 5-carboxymethoxyuridine(34) in tRNA + S-adenosyl-L-homocysteine + H(+). Catalyzes carboxymethyl transfer from carboxy-S-adenosyl-L-methionine (Cx-SAM) to 5-hydroxyuridine (ho5U) to form 5-carboxymethoxyuridine (cmo5U) at position 34 in tRNAs. This is tRNA U34 carboxymethyltransferase from Aliivibrio salmonicida (strain LFI1238) (Vibrio salmonicida (strain LFI1238)).